Consider the following 328-residue polypeptide: 4-hydroxythreonine-4-phosphate dehydrogenase (328 aa).

Residues His135 and Thr136 each coordinate substrate. The a divalent metal cation site is built by His165, His210, and His265. 3 residues coordinate substrate: Lys273, Asn282, and Arg291.

The protein belongs to the PdxA family. In terms of assembly, homodimer. It depends on Zn(2+) as a cofactor. Mg(2+) is required as a cofactor. Requires Co(2+) as cofactor.

It is found in the cytoplasm. It catalyses the reaction 4-(phosphooxy)-L-threonine + NAD(+) = 3-amino-2-oxopropyl phosphate + CO2 + NADH. Its pathway is cofactor biosynthesis; pyridoxine 5'-phosphate biosynthesis; pyridoxine 5'-phosphate from D-erythrose 4-phosphate: step 4/5. Its function is as follows. Catalyzes the NAD(P)-dependent oxidation of 4-(phosphooxy)-L-threonine (HTP) into 2-amino-3-oxo-4-(phosphooxy)butyric acid which spontaneously decarboxylates to form 3-amino-2-oxopropyl phosphate (AHAP). The sequence is that of 4-hydroxythreonine-4-phosphate dehydrogenase from Enterobacter sp. (strain 638).